We begin with the raw amino-acid sequence, 73 residues long: Maltose-binding periplasmic protein (73 aa).

The N-terminal stretch at 1-30 (MMTKTNLKMGARTLALSVLATLVLSASALA) is a signal peptide.

Belongs to the bacterial solute-binding protein 1 family.

It localises to the periplasm. In terms of biological role, involved in the high-affinity maltose membrane transport system. Initial receptor for the active transport of and chemotaxis toward maltooligosaccharides. The protein is Maltose-binding periplasmic protein (malE) of Photorhabdus luminescens (Xenorhabdus luminescens).